A 308-amino-acid chain; its full sequence is MSAQKPGLHPRNRHHSRYDLATLCQVNPELRQFLTLTPAGEQSVDFANPLAVKALNKALLAHFYAVANWDIPDGFLCPPVPGRADYIHHLADLLAEATGSILANASILDIGVGANCIYPLIGVHEYGWRFTGSETSSQALSSAQAIISANPGLNRAIRLRRQKESGAIFNGIIHKNEQYDATLCNPPFHDSAAAARAGSERKRRNLGLNKDDALNFGGQQQELWCEGGEVAFIKKMIEESKGFAKQVMWFTSLVSRGENLPPLYRVLTEVGAVKVVKKEMAQGQKQSRFIAWTFMNDEQRRRFVNRQR.

Belongs to the methyltransferase superfamily. METTL16/RlmF family.

The protein localises to the cytoplasm. It carries out the reaction adenosine(1618) in 23S rRNA + S-adenosyl-L-methionine = N(6)-methyladenosine(1618) in 23S rRNA + S-adenosyl-L-homocysteine + H(+). Functionally, specifically methylates the adenine in position 1618 of 23S rRNA. In Escherichia coli (strain SMS-3-5 / SECEC), this protein is Ribosomal RNA large subunit methyltransferase F.